The following is a 567-amino-acid chain: Dihydrolipoyllysine-residue acetyltransferase component of pyruvate dehydrogenase complex (567 aa).

2 consecutive Lipoyl-binding domains span residues 2 to 75 (SKQI…LVLE) and 108 to 181 (IVEV…MRFE). Lys-41 and Lys-147 each carry N6-lipoyllysine. The span at 192-238 (SAPASTSAPQTAAPATTAQAPQAAAPDTTAQAPQAAAPDTTAQAAQS) shows a compositional bias: low complexity. The interval 192 to 249 (SAPASTSAPQTAAPATTAQAPQAAAPDTTAQAPQAAAPDTTAQAAQSNNNVSGLSQEQ) is disordered. Positions 239 to 249 (NNNVSGLSQEQ) are enriched in polar residues. The Peripheral subunit-binding (PSBD) domain maps to 258 to 295 (HATPVIRRLAREFGVNLDKVKGTGRKGRIVKEDIEAYV). Catalysis depends on residues Cys-484, His-540, and Asp-544.

It belongs to the 2-oxoacid dehydrogenase family. In terms of assembly, forms a 24-polypeptide structural core with octahedral symmetry. (R)-lipoate is required as a cofactor.

It catalyses the reaction N(6)-[(R)-dihydrolipoyl]-L-lysyl-[protein] + acetyl-CoA = N(6)-[(R)-S(8)-acetyldihydrolipoyl]-L-lysyl-[protein] + CoA. In terms of biological role, the pyruvate dehydrogenase complex catalyzes the overall conversion of pyruvate to acetyl-CoA and CO(2). It contains multiple copies of three enzymatic components: pyruvate dehydrogenase (E1), dihydrolipoamide acetyltransferase (E2) and lipoamide dehydrogenase (E3). The sequence is that of Dihydrolipoyllysine-residue acetyltransferase component of pyruvate dehydrogenase complex (aceF) from Haemophilus influenzae (strain ATCC 51907 / DSM 11121 / KW20 / Rd).